The primary structure comprises 142 residues: Large ribosomal subunit protein uL13 (142 aa).

The protein belongs to the universal ribosomal protein uL13 family. Part of the 50S ribosomal subunit.

In terms of biological role, this protein is one of the early assembly proteins of the 50S ribosomal subunit, although it is not seen to bind rRNA by itself. It is important during the early stages of 50S assembly. The protein is Large ribosomal subunit protein uL13 of Dechloromonas aromatica (strain RCB).